A 458-amino-acid chain; its full sequence is Purple acid phosphatase 23 (458 aa).

The signal sequence occupies residues 1-19 (MTLLIMITLTSISLLLAAA). N-linked (GlcNAc...) asparagine glycans are attached at residues Asn-59, Asn-121, and Asn-136. A Fe cation-binding site is contributed by Asp-194. An N-linked (GlcNAc...) asparagine glycan is attached at Asn-200. 2 residues coordinate Fe cation: Asp-221 and Tyr-224. Asp-221 is a Mn(2+) binding site. Asn-278 is a binding site for Mn(2+). Asn-278 is a substrate binding site. A glycan (N-linked (GlcNAc...) asparagine) is linked at Asn-331. His-360 serves as a coordination point for Mn(2+). His-370 serves as the catalytic Proton donor. His-397 is a Mn(2+) binding site. Residue 397-399 (HVH) participates in substrate binding. Fe cation is bound at residue His-399. N-linked (GlcNAc...) asparagine glycans are attached at residues Asn-409 and Asn-455.

The protein belongs to the metallophosphoesterase superfamily. Purple acid phosphatase family. Homodimer. Fe cation is required as a cofactor. Mn(2+) serves as cofactor. In terms of tissue distribution, specifically expressed in flowers.

Its subcellular location is the secreted. It catalyses the reaction a phosphate monoester + H2O = an alcohol + phosphate. In terms of biological role, acid phosphatase activity with ATP, ADP, dATP, pyrophosphate, polyphosphate, phosphoserine and phosphothreonine. Low or no activity with phosphotyrosine, AMP and phytate. The polypeptide is Purple acid phosphatase 23 (PAP23) (Arabidopsis thaliana (Mouse-ear cress)).